The sequence spans 330 residues: Phospho-N-acetylmuramoyl-pentapeptide-transferase (330 aa).

9 helical membrane-spanning segments follow: residues 13–33 (VFVF…LIPM), 58–78 (PTMG…FYAG), 83–103 (ILPL…DDFI), 113–133 (LYWN…AVYL), 152–172 (VSLG…STNA), 179–199 (LDGL…IVAM), 209–229 (MFSA…AYPA), 231–250 (IFMG…AIAI), and 304–324 (VKVV…GFFA).

It belongs to the glycosyltransferase 4 family. MraY subfamily. Mg(2+) serves as cofactor.

It localises to the cell membrane. The catalysed reaction is UDP-N-acetyl-alpha-D-muramoyl-L-alanyl-gamma-D-glutamyl-meso-2,6-diaminopimeloyl-D-alanyl-D-alanine + di-trans,octa-cis-undecaprenyl phosphate = di-trans,octa-cis-undecaprenyl diphospho-N-acetyl-alpha-D-muramoyl-L-alanyl-D-glutamyl-meso-2,6-diaminopimeloyl-D-alanyl-D-alanine + UMP. Its pathway is cell wall biogenesis; peptidoglycan biosynthesis. Catalyzes the initial step of the lipid cycle reactions in the biosynthesis of the cell wall peptidoglycan: transfers peptidoglycan precursor phospho-MurNAc-pentapeptide from UDP-MurNAc-pentapeptide onto the lipid carrier undecaprenyl phosphate, yielding undecaprenyl-pyrophosphoryl-MurNAc-pentapeptide, known as lipid I. The protein is Phospho-N-acetylmuramoyl-pentapeptide-transferase of Acetivibrio thermocellus (strain ATCC 27405 / DSM 1237 / JCM 9322 / NBRC 103400 / NCIMB 10682 / NRRL B-4536 / VPI 7372) (Clostridium thermocellum).